We begin with the raw amino-acid sequence, 58 residues long: uncharacterized protein (58 aa).

The span at 23-51 shows a compositional bias: low complexity; that stretch reads TTTSTSTTTTSTTTSTTTSTTTTTTTTTT. A disordered region spans residues 23 to 58; the sequence is TTTSTSTTTTSTTTSTTTSTTTTTTTTTTKDFNTET.

This is an uncharacterized protein from Dictyostelium discoideum (Social amoeba).